The chain runs to 102 residues: PqqA binding protein (102 aa).

It belongs to the PqqD family. As to quaternary structure, monomer. Interacts with PqqE.

It functions in the pathway cofactor biosynthesis; pyrroloquinoline quinone biosynthesis. Functions as a PqqA binding protein and presents PqqA to PqqE, in the pyrroloquinoline quinone (PQQ) biosynthetic pathway. The polypeptide is PqqA binding protein (Rhodopseudomonas palustris (strain BisB5)).